The chain runs to 554 residues: Hydroxylamine reductase (554 aa).

[2Fe-2S] cluster is bound by residues Cys3, Cys6, Cys18, and Cys25. Hybrid [4Fe-2O-2S] cluster is bound by residues His252, Glu276, Cys320, Cys408, Cys436, Cys461, Glu495, and Lys497. Cysteine persulfide is present on Cys408.

The protein belongs to the HCP family. Requires [2Fe-2S] cluster as cofactor. The cofactor is hybrid [4Fe-2O-2S] cluster.

The protein localises to the cytoplasm. It catalyses the reaction A + NH4(+) + H2O = hydroxylamine + AH2 + H(+). Catalyzes the reduction of hydroxylamine to form NH(3) and H(2)O. This chain is Hydroxylamine reductase, found in Shewanella amazonensis (strain ATCC BAA-1098 / SB2B).